A 235-amino-acid polypeptide reads, in one-letter code: Putative uridine kinase C227.14 (235 aa).

Position 36–43 (36–43 (GGPGSGKS)) interacts with ATP.

Belongs to the uridine kinase family.

It is found in the cytoplasm. It localises to the nucleus. It carries out the reaction uridine + ATP = UMP + ADP + H(+). The catalysed reaction is cytidine + ATP = CMP + ADP + H(+). It participates in pyrimidine metabolism; CTP biosynthesis via salvage pathway; CTP from cytidine: step 1/3. Its pathway is pyrimidine metabolism; UMP biosynthesis via salvage pathway; UMP from uridine: step 1/1. The polypeptide is Putative uridine kinase C227.14 (Schizosaccharomyces pombe (strain 972 / ATCC 24843) (Fission yeast)).